Consider the following 625-residue polypeptide: Chaperone protein HtpG (625 aa).

An a; substrate-binding region spans residues 1 to 337; it reads MSTNQETRGF…TNDLPLNVSR (337 aa). Positions 338–554 are b; sequence EILQENKITA…NDEMTTQMAK (217 aa). Residues 555–625 form a c region; sequence LFAAMGQKAP…FIKRMNKLLG (71 aa).

The protein belongs to the heat shock protein 90 family. Homodimer.

It is found in the cytoplasm. Molecular chaperone. Has ATPase activity. This Actinobacillus pleuropneumoniae serotype 5b (strain L20) protein is Chaperone protein HtpG.